The primary structure comprises 426 residues: Actin-like protein 6B (426 aa).

The tract at residues 39–82 (TTVGLLAAEEGGGLELEGDKEKKGKIFHIDTNALHVPRDGAEVM) is essential for mediating its function in dendritic development; may contribute to neuronal-specific targeting.

It belongs to the actin family. As to quaternary structure, component of the multiprotein chromatin-remodeling complexes SWI/SNF: SWI/SNF-A (BAF), SWI/SNF-B (PBAF) and related complexes. The canonical complex contains a catalytic subunit (either SMARCA4/BRG1/BAF190A or SMARCA2/BRM/BAF190B) and at least SMARCE1, ACTL6A/BAF53, SMARCC1/BAF155, SMARCC2/BAF170 and SMARCB1/SNF5/BAF47. Other subunits specific to each of the complexes may also be present permitting several possible combinations developmentally and tissue specific. Component of the BAF complex, which includes at least actin (ACTB), ARID1A/BAF250A, ARID1B/BAF250B, SMARCA2/BRM, SMARCA4/BRG1/BAF190A, ACTL6A/BAF53, ACTL6B/BAF53B, SMARCE1/BAF57, SMARCC1/BAF155, SMARCC2/BAF170, SMARCB1/SNF5/INI1 and one or more SMARCD1/BAF60A, SMARCD2/BAF60B, or SMARCD3/BAF60C. Component of neuron-specific chromatin remodeling complex (nBAF complex) composed of at least, ARID1A/BAF250A or ARID1B/BAF250B, SMARCD1/BAF60A or SMARCD2/BAF60B or SMARCD3/BAF60C, SMARCA2/BRM/BAF190B, SMARCA4/BRG1/BAF190A, SMARCB1/BAF47, SMARCC1/BAF155, SMARCE1/BAF57, SMARCC2/BAF170, DPF1/BAF45B, DPF3/BAF45C, ACTL6B/BAF53B and actin (ACTB). Note that the nBAF complex is polymorphic in regard to the ATPase, SMARCA2 and SMARCA4 occupying mutually exclusive positions. May be a component of the SWI/SNF-B (PBAF) chromatin remodeling complex, at least composed of SMARCA4/BRG1, SMARCB1/BAF47/SNF5, ACTL6A/BAF53A or ACTL6B/BAF53B, SMARCE1/BAF57, SMARCD1/BAF60A, SMARCD2/BAF60B, perhaps SMARCD3/BAF60C, SMARCC1/BAF155, SMARCC2/BAF170, PBRM1/BAF180, ARID2/BAF200 and actin.

The protein resides in the nucleus. Functionally, involved in transcriptional activation and repression of select genes by chromatin remodeling (alteration of DNA-nucleosome topology). Component of SWI/SNF chromatin remodeling complexes that carry out key enzymatic activities, changing chromatin structure by altering DNA-histone contacts within a nucleosome in an ATP-dependent manner. Belongs to the neuron-specific chromatin remodeling complex (nBAF complex), as such plays a role in remodeling mononucleosomes in an ATP-dependent fashion, and is required for postmitotic neural development and dendritic outgrowth. During neural development a switch from a stem/progenitor to a postmitotic chromatin remodeling mechanism occurs as neurons exit the cell cycle and become committed to their adult state. The transition from proliferating neural stem/progenitor cells to postmitotic neurons requires a switch in subunit composition of the npBAF and nBAF complexes. As neural progenitors exit mitosis and differentiate into neurons, npBAF complexes which contain ACTL6A/BAF53A and PHF10/BAF45A, are exchanged for homologous alternative ACTL6B/BAF53B and DPF1/BAF45B or DPF3/BAF45C subunits in neuron-specific complexes (nBAF). The npBAF complex is essential for the self-renewal/proliferative capacity of the multipotent neural stem cells. The nBAF complex along with CREST plays a role regulating the activity of genes essential for dendrite growth. ACTL6B/BAF53B is not essential for assembly of the nBAF complex but is required for targeting the complex and CREST to the promoter of genes essential for dendritic growth. Essential for neuronal maturation and dendrite development. This is Actin-like protein 6B from Homo sapiens (Human).